The sequence spans 315 residues: MSNTDALNTANTQITENVDTSSMKVEKTHDSDPMKITNTSFALEMTQHLFEDLVAHGYKNIVKHEVYPGPIIDLQNLVRVMTKGTFIPIKMEDIKDLHDFVMDRLSEFDCSCLGHLCPKEYMIQIWKAGRIQSEFYYCYNYQLQDLSQIYPFVIEWILKRDDMPLNLDKESYEATALMMSKLLESLIKFGNEKIEFVKFYKLCGHIQCPCEKKPASYLDVKKLVGVLTDGGIIGFEGLTKLYVHLEKSIQEIDDRWSHWLPGRTRKPIYYKTFTKGRVTQLSIKCYSFYLQEIALIAYVVTQFILQEKPDLSYRA.

Over residues 1 to 23 the composition is skewed to polar residues; it reads MSNTDALNTANTQITENVDTSSM. The tract at residues 1–31 is disordered; sequence MSNTDALNTANTQITENVDTSSMKVEKTHDS.

This is an uncharacterized protein from Acanthamoeba polyphaga mimivirus (APMV).